Reading from the N-terminus, the 228-residue chain is Lipoprotein-releasing system ATP-binding protein LolD (228 aa).

The ABC transporter domain maps to 6–227 (LELLGIDRTY…LKDGKLIDYV (222 aa)). 42 to 49 (GPSGSGKS) is a binding site for ATP.

This sequence belongs to the ABC transporter superfamily. Lipoprotein translocase (TC 3.A.1.125) family. The complex is composed of two ATP-binding proteins (LolD) and two transmembrane proteins (LolC and LolE).

The protein localises to the cell inner membrane. In terms of biological role, part of the ABC transporter complex LolCDE involved in the translocation of mature outer membrane-directed lipoproteins, from the inner membrane to the periplasmic chaperone, LolA. Responsible for the formation of the LolA-lipoprotein complex in an ATP-dependent manner. This chain is Lipoprotein-releasing system ATP-binding protein LolD, found in Hyphomonas neptunium (strain ATCC 15444).